Consider the following 502-residue polypeptide: TGF-beta-activated kinase 1 and MAP3K7-binding protein 1 (502 aa).

The segment at M1–L21 is disordered. The residue at position 7 (S7) is a Phosphoserine. Residues S7 to W17 show a composition bias toward polar residues. In terms of domain architecture, PPM-type phosphatase spans G28–F365. An O-linked (GlcNAc) serine glycan is attached at S393. The span at Q414–P437 shows a compositional bias: polar residues. Positions Q414–V476 are disordered. Residue S421 is modified to Phosphoserine. T429 carries the post-translational modification Phosphothreonine. At S436 the chain carries Phosphoserine. Residues T438–S455 show a composition bias toward low complexity. T440 bears the Phosphothreonine mark.

Interacts with XIAP and BIRC7. Interacts with TRAF6 and MAP3K7; during IL-1 signaling. Identified in the TRIKA2 complex composed of MAP3K7, TAB1 and TAB2. Interacts with TRAF6 and MAPK14; these interactions allow MAPK14 autophosphorylation. Interacts with STING1; interaction takes place following cGAMP activation and promotes TAB1 recruitment to the endoplasmic reticulum, triggering MAP3K7/TAK1 activation and STING1 phosphorylation. Post-translationally, phosphorylated at all three sites Ser-421, Thr-429 and Ser-436 by MAPK14 when cells were exposed to cellular stresses, or stimulated with TNF-alpha, IL1 or LPS. These phosphorylations inhibit TAK1 activation by a feedback control mechanism. Dephosphorylated by DUSP14 at Ser-436, leading to TAB1-MAP3K7/TAK1 complex inactivation in T-cells. In terms of processing, ubiquitinated by MAP3K1 with 'Lys-63'-linked polyubiquitin; leading to activation of TAK1 and of JNK and p38 MAP kinases following EGF and TGF-beta stimulation. Ubiquitinated by ITCH with 'Lys-48'-linked polyubiquitin; leading to proteasomal degradation. Ubiquitinated by RNF114 during maternal-to-zygotic transition; leading to degradation. O-GlcNAcylated at Ser-393 is required for full MAP3K7/TAK1 activation upon stimulation with IL-1 or osmotic stress.

The protein localises to the cytoplasm. It localises to the cytosol. Its subcellular location is the endoplasmic reticulum membrane. Key adapter protein that plays an essential role in JNK and NF-kappa-B activation and proinflammatory cytokines production in response to stimulation with TLRs and cytokines. Mechanistically, associates with the catalytic domain of MAP3K7/TAK1 to trigger MAP3K7/TAK1 autophosphorylation leading to its full activation. Similarly, associates with MAPK14 and triggers its autophosphorylation and subsequent activation. In turn, MAPK14 phosphorylates TAB1 and inhibits MAP3K7/TAK1 activation in a feedback control mechanism. Also plays a role in recruiting MAPK14 to the TAK1 complex for the phosphorylation of the TAB2 and TAB3 regulatory subunits. The sequence is that of TGF-beta-activated kinase 1 and MAP3K7-binding protein 1 (Tab1) from Mus musculus (Mouse).